Consider the following 122-residue polypeptide: Small ribosomal subunit protein uS13 (122 aa).

The disordered stretch occupies residues 93 to 122 (RRGLPVRGQKTKTNARTRKGPKKTIANKKK).

This sequence belongs to the universal ribosomal protein uS13 family. In terms of assembly, part of the 30S ribosomal subunit. Forms a loose heterodimer with protein S19. Forms two bridges to the 50S subunit in the 70S ribosome.

Located at the top of the head of the 30S subunit, it contacts several helices of the 16S rRNA. In the 70S ribosome it contacts the 23S rRNA (bridge B1a) and protein L5 of the 50S subunit (bridge B1b), connecting the 2 subunits; these bridges are implicated in subunit movement. Contacts the tRNAs in the A and P-sites. This Clostridium beijerinckii (strain ATCC 51743 / NCIMB 8052) (Clostridium acetobutylicum) protein is Small ribosomal subunit protein uS13.